Consider the following 227-residue polypeptide: Ras-related protein Rab-3C (227 aa).

9 residues coordinate GTP: Ser-39, Gly-42, Lys-43, Thr-44, Ser-45, Thr-56, Ser-57, Ser-61, and Thr-62. Position 44 (Thr-44) interacts with Mg(2+). A Switch 1 motif is present at residues 53 to 66 (DSFTSAFVSTVGID). Mg(2+)-binding residues include Thr-62 and Asp-85. Thr-86 is modified (phosphothreonine). The Switch 2 motif lies at 86–104 (TAGQERYRTITTAYYRGAM). Residues Gly-88, Asn-143, Lys-144, Asp-146, Ala-174, and Lys-175 each coordinate GTP. 2 positions are modified to phosphoserine: Ser-196 and Ser-198. Thr-206 bears the Phosphothreonine mark. S-geranylgeranyl cysteine attachment occurs at residues Cys-225 and Cys-227. Cys-227 bears the Cysteine methyl ester mark.

The protein belongs to the small GTPase superfamily. Rab family. Interacts with RIMS1, RIMS2, RPH3A and RPH3AL. The GTP-bound form interacts with REP15. Interacts with GDI2, CHM and CHML; phosphorylation at Thr-86 disrupts these interactions. Interacts with MADD (via uDENN domain); the GTP-bound form is preferred for interaction. It depends on Mg(2+) as a cofactor. Phosphorylation of Thr-86 in the switch II region by LRRK2 prevents the association of RAB regulatory proteins, including CHM, CHML and RAB GDP dissociation inhibitor GDI2.

The protein localises to the cell membrane. The catalysed reaction is GTP + H2O = GDP + phosphate + H(+). Regulated by guanine nucleotide exchange factors (GEFs) which promote the exchange of bound GDP for free GTP. Regulated by GTPase activating proteins (GAPs) which increase the GTP hydrolysis activity. Inhibited by GDP dissociation inhibitors (GDIs) which prevent Rab-GDP dissociation. In terms of biological role, the small GTPases Rab are key regulators of intracellular membrane trafficking, from the formation of transport vesicles to their fusion with membranes. Rabs cycle between an inactive GDP-bound form and an active GTP-bound form that is able to recruit to membranes different sets of downstream effectors directly responsible for vesicle formation, movement, tethering and fusion. The sequence is that of Ras-related protein Rab-3C (RAB3C) from Bos taurus (Bovine).